Reading from the N-terminus, the 139-residue chain is D-ribose pyranase (139 aa).

H20 serves as the catalytic Proton donor. Substrate contacts are provided by residues D28, H106, and 128–130 (YAN).

It belongs to the RbsD / FucU family. RbsD subfamily. In terms of assembly, homodecamer.

The protein localises to the cytoplasm. It catalyses the reaction beta-D-ribopyranose = beta-D-ribofuranose. It functions in the pathway carbohydrate metabolism; D-ribose degradation; D-ribose 5-phosphate from beta-D-ribopyranose: step 1/2. In terms of biological role, catalyzes the interconversion of beta-pyran and beta-furan forms of D-ribose. This chain is D-ribose pyranase, found in Escherichia coli O45:K1 (strain S88 / ExPEC).